Here is an 837-residue protein sequence, read N- to C-terminus: Tuftelin-interacting protein 11 (837 aa).

Basic and acidic residues-rich tracts occupy residues 1 to 13 (MSLS…GEGR) and 50 to 64 (TYGV…DERP). Disordered stretches follow at residues 1–21 (MSLS…DDER) and 50–136 (TYGV…AGGT). The segment at 1-50 (MSLSHLYRDGEGRVDDDDDERENFEITDWDLQNEFNPNRQRHWQTKEEAT) is required for interaction with DHX15. 3 positions are modified to phosphoserine: S2, S59, and S98. Over residues 91–102 (EEAELDDSEDEE) the composition is skewed to acidic residues. The span at 103 to 116 (KPGKQEELPKDLGP) shows a compositional bias: basic and acidic residues. S144 carries the phosphoserine modification. The G-patch domain maps to 149–195 (TKGIGQKLLQKMGYVPGRGLGKNAQGIINPIEAKQRKGKGAVGAYGS). The tract at residues 183-236 (QRKGKGAVGAYGSERTTQSLQDFPVVDSEEEAEEEFQKELSQWRKDPSGSKKKP) is disordered. A Phosphoserine modification is found at S210. The segment covering 217–231 (EFQKELSQWRKDPSG) has biased composition (basic and acidic residues). Positions 700-705 (VKDKFN) match the Nuclear localization signal motif. Residues 710–734 (IMNRAVSSNVGAYMQPGARENIAYL) are required for nuclear speckle localization.

This sequence belongs to the TFP11/STIP family. Identified in the spliceosome C complex. Found in the Intron Large (IL) complex, a post-mRNA release spliceosomal complex containing the excised intron, U2, U5 and U6 snRNPs, and splicing factors. Interacts with TUFT1. Interacts with DHX15; indicative for a recruitment of DHX15 to the IL complex. Interacts with GCFC2.

It localises to the cytoplasm. It is found in the nucleus. Involved in pre-mRNA splicing, specifically in spliceosome disassembly during late-stage splicing events. Intron turnover seems to proceed through reactions in two lariat-intron associated complexes termed Intron Large (IL) and Intron Small (IS). In cooperation with DHX15 seems to mediate the transition of the U2, U5 and U6 snRNP-containing IL complex to the snRNP-free IS complex leading to efficient debranching and turnover of excised introns. May play a role in the differentiation of ameloblasts and odontoblasts or in the forming of the enamel extracellular matrix. The sequence is that of Tuftelin-interacting protein 11 (TFIP11) from Oryctolagus cuniculus (Rabbit).